Reading from the N-terminus, the 171-residue chain is UPF0260 protein Nham_1404 (171 aa).

The protein belongs to the UPF0260 family.

This is UPF0260 protein Nham_1404 from Nitrobacter hamburgensis (strain DSM 10229 / NCIMB 13809 / X14).